A 465-amino-acid polypeptide reads, in one-letter code: 2-halobenzoate 1,2-dioxygenase large subunit (465 aa).

The Rieske domain occupies 56–154; the sequence is WVFLAHESQV…GFNVDGSHDL (99 aa). Residues C98, H100, C118, and H121 each coordinate [2Fe-2S] cluster. Fe cation-binding residues include H227 and H232.

Belongs to the bacterial ring-hydroxylating dioxygenase alpha subunit family. In terms of assembly, heterohexamer of 3 large (CbdA) subunits and 3 small (CbdB) subunits. The heterohexamer is part of 2-halobenzoate dioxygenase two component enzyme system. The other component is a NADH:acceptor reductase (CdbC). It depends on [2Fe-2S] cluster as a cofactor. The cofactor is Fe(2+).

It catalyses the reaction a 2-halobenzoate + NADH + O2 + H(+) = a halide anion + catechol + CO2 + NAD(+). It participates in xenobiotic degradation; benzoate degradation via CoA ligation. In terms of biological role, component of 2-halobenzoate dioxygenase multicomponent enzyme system which catalyzes the incorporation of both atoms of molecular oxygen into 2-halobenzoate to form catechol. The sequence is that of 2-halobenzoate 1,2-dioxygenase large subunit (cbdA) from Burkholderia cepacia (Pseudomonas cepacia).